A 316-amino-acid chain; its full sequence is CRISPR-associated endonuclease Cas1 (316 aa).

Positions 143, 206, and 221 each coordinate Mn(2+).

The protein belongs to the CRISPR-associated endonuclease Cas1 family. Homodimer, forms a heterotetramer with a Cas2 homodimer. Mg(2+) serves as cofactor. It depends on Mn(2+) as a cofactor.

Functionally, CRISPR (clustered regularly interspaced short palindromic repeat), is an adaptive immune system that provides protection against mobile genetic elements (viruses, transposable elements and conjugative plasmids). CRISPR clusters contain spacers, sequences complementary to antecedent mobile elements, and target invading nucleic acids. CRISPR clusters are transcribed and processed into CRISPR RNA (crRNA). Acts as a dsDNA endonuclease. Involved in the integration of spacer DNA into the CRISPR cassette. This Aquifex aeolicus (strain VF5) protein is CRISPR-associated endonuclease Cas1.